A 204-amino-acid chain; its full sequence is MEEGKGTEKKGCIITVIIVCIVLTVGLDIVAGFVGLQAQAAQQYVKHDKLECKAPSKTAFVLGIIAVSCLATAHVSANVIGCSISNLFQALGALPKNKITTYFNMACLFLIWVVGIFGALILANGIWSNTESRIRCRFTNNHVFSIGGKVCFLHAIVSGIYYISSIVARARHFHRTKPNKTKPSELKPIPTEPNEAEPNSTPNP.

Helical transmembrane passes span 13-33 (IITV…VAGF), 60-80 (FVLG…ANVI), 107-127 (CLFL…NGIW), and 143-163 (VFSI…IYYI). The disordered stretch occupies residues 177–204 (KPNKTKPSELKPIPTEPNEAEPNSTPNP). An N-linked (GlcNAc...) asparagine glycan is attached at asparagine 179.

Belongs to the DESIGUAL family. In terms of tissue distribution, only expressed in inflorescences.

It is found in the endoplasmic reticulum membrane. This is Protein DESIGUAL 4 from Arabidopsis thaliana (Mouse-ear cress).